The primary structure comprises 551 residues: Prunin 1 Pru du 6 (551 aa).

An N-terminal signal peptide occupies residues 1 to 20 (MAKAFVFSLCLLLVFNGCLA). Intrachain disulfides connect Cys-32–Cys-65 and Cys-108–Cys-374. Residues 37 to 312 (LQAREPDNRI…ALNVNEETAR (276 aa)) enclose the Cupin type-1 1 domain. Disordered stretches follow at residues 111-194 (TFEE…QKTR), 238-293 (NPRK…NVFS), and 329-360 (GNLD…RQQQ). 3 stretches are compositionally biased toward low complexity: residues 114-124 (ESQQSSQQGRQ), 132-148 (QQQQ…QQEQ), and 168-185 (QEQQ…QQFR). Arg-194 lines the Ca(2+) pocket. Residues 254–275 (QQGQSQPRQQGEQGRPGQHQQP) are compositionally biased toward low complexity. Over residues 282-293 (QEQQGNGNNVFS) the composition is skewed to polar residues. The span at 339-350 (GRQEREHEERQQ) shows a compositional bias: basic and acidic residues. Residues 351–360 (EQLQQERQQQ) are compositionally biased toward low complexity. The NGXEET; peptidase recognition motif motif lies at 367 to 372 (NGLEET). A Cupin type-1 2 domain is found at 380–529 (ENIGNPERAD…AYQISREQAR (150 aa)).

Belongs to the 11S seed storage protein (globulins) family. In terms of assembly, hexamer of two trimers; each subunit is composed of an acidic and a basic chain derived from a single precursor and linked by a disulfide bond. Proteolytically processed from a single precursor to produce an acidic and a basic chain that are linked by a disulfide bond. Expressed in seed (at protein level). Expressed in seed.

Its function is as follows. Seed storage protein. The chain is Prunin 1 Pru du 6 from Prunus dulcis (Almond).